The chain runs to 248 residues: Tryptophan synthase alpha chain (248 aa).

Active-site proton acceptor residues include Glu36 and Asp47.

This sequence belongs to the TrpA family. In terms of assembly, tetramer of two alpha and two beta chains.

The enzyme catalyses (1S,2R)-1-C-(indol-3-yl)glycerol 3-phosphate + L-serine = D-glyceraldehyde 3-phosphate + L-tryptophan + H2O. The protein operates within amino-acid biosynthesis; L-tryptophan biosynthesis; L-tryptophan from chorismate: step 5/5. Functionally, the alpha subunit is responsible for the aldol cleavage of indoleglycerol phosphate to indole and glyceraldehyde 3-phosphate. The sequence is that of Tryptophan synthase alpha chain from Pyrococcus abyssi (strain GE5 / Orsay).